The following is a 235-amino-acid chain: Chromosome partition protein MukE (235 aa).

Residues 204–235 form a disordered region; it reads QQEPSQSSLLDGFDADDTGHHDSELTMQEGEV.

The protein belongs to the MukE family. Interacts, and probably forms a ternary complex, with MukF and MukB. The complex formation is stimulated by calcium or magnesium.

Its subcellular location is the cytoplasm. The protein resides in the nucleoid. Functionally, involved in chromosome condensation, segregation and cell cycle progression. May participate in facilitating chromosome segregation by condensation DNA from both sides of a centrally located replisome during cell division. Probably acts via its interaction with MukB and MukF. The polypeptide is Chromosome partition protein MukE (Photobacterium profundum (strain SS9)).